The primary structure comprises 133 residues: Large ribosomal subunit protein bL17 (133 aa).

This sequence belongs to the bacterial ribosomal protein bL17 family. In terms of assembly, part of the 50S ribosomal subunit. Contacts protein L32.

This chain is Large ribosomal subunit protein bL17, found in Ehrlichia chaffeensis (strain ATCC CRL-10679 / Arkansas).